Reading from the N-terminus, the 1273-residue chain is MNNRPIPRNQASSSLGRNDLKPGLFGRSSFRVQHYSGTNGISPIGSSPRTKISPRYSFASSFATSESSLRESSYFDERPPVQDTGVPKSSGLYYSRASPKELSSIDRINDSSFNGIVCAGKTHLGLYKFSPQDKSIDCMHDFVSAGNDGNRGSNVQMGLGKRSKRTKLSTIADVKAGFHNHKNYVAICSNSTVLSIYDINKTGSIDNPLVTNCSQHVRSVNSFDFNMVQTNLIISGGQDSCIKIWDLRSSRSRTLSRADVNINTASDSIRDVKWMPHPTACRSASQNDLRSGVGGAAGYKFASIHDSGLLLKFDLRQPNQVEKRINAHSGPGLCLNWHPYQDYISTGGRDGKCCLWYVGDGKPGTDFLQAGNTSVNTPHSMTSNLPTNLSVVPDMTINCGFPVTKLKVRPCYEKNVLNSLVSMSSMAEDFGVSIYSLARKYIPKYNLSTSSASLGFVWWDDNLIFNIDKDNRINGWYLDREPTVLDNMPKIVTRWRDIEGNGLLFIDQDRGGYQVNDEVPANIEESKKPPNQRVSINSLSGTAGGGNSGGGSNSGMIGSIKKGISQTGLTSFAGERPALSKTGLNFSNKSLATQSMNNSHSNSFSSYAGAGPGPLNEVADYSGIESPFLMTIDLPYILNNMRVSQLPPERKSLYSPEVQAIRESPVKVFKFLAKELEFSYMQEGRSGEMKNATQLSNVNEDTTKKDLMVKFGISEKSTWTALVNKKNEAVEAISKKSVSTKEGSESLIESDGESSAKSHESDDNSSDADKKENAKDGTMHVQEKIDILLELIPICGHNASVYSYIDDLPNFKIWILIRDSLLWDLERLSVEYPDEKLPETQSTDQIGQPITMGNDDSLASDTRSYMTSDLNYFVEEHPRALRSDSDEPKDHKKPLSGLKSQLTKIQETEASIDDSLNPPKMLKKPDNPIKQEQIGSRLNDDSDSAVLEDDDNEEKSDFDTQIKGIPITNKRQPRQSFIDTYMGGLKSPIGSSNANNEFFMGRVGHSLGHSSPGSKGSPMASLNNGEFTYPGFKRMSSRNDRRSSGSLFLSPLKRRESSTAEFFNKSPMRPLSPVAPVSSFKSNPTEFLPPWNTRRLLKQIFKQAVEMGNILLVVNILFLFQNLYQLTSTEVLKNTLAQFIKILHKHELFELSAAILKCSPWEVVINADGGQSLVPIFCDKCGKLITNEPSKEKFTLEAQEKGNSMPLQRFGYWYCDSCKKPNTLCVFCERPIKTLAIGLLECGHEGHFQCLQSWFLDEGMAECPGGCMNQIRL.

The span at 1 to 16 shows a compositional bias: polar residues; it reads MNNRPIPRNQASSSLG. Disordered regions lie at residues 1–20 and 69–93; these read MNNR…RNDL and LRES…SGLY. WD repeat units follow at residues 119-164, 166-207, 215-255, 327-366, and 448-486; these read AGKT…KRSK, TKLS…SIDN, QHVR…SRTL, AHSG…PGTD, and STSS…TVLD. The disordered stretch occupies residues 521–559; the sequence is ANIEESKKPPNQRVSINSLSGTAGGGNSGGGSNSGMIGS. A compositionally biased stretch (gly residues) spans 542–553; it reads TAGGGNSGGGSN. A WD 6 repeat occupies 639-679; the sequence is NNMRVSQLPPERKSLYSPEVQAIRESPVKVFKFLAKELEFS. Positions 741–777 are disordered; the sequence is KEGSESLIESDGESSAKSHESDDNSSDADKKENAKDG. Basic and acidic residues predominate over residues 754–777; it reads SSAKSHESDDNSSDADKKENAKDG. The stretch at 784 to 824 is one WD 7 repeat; sequence KIDILLELIPICGHNASVYSYIDDLPNFKIWILIRDSLLWD. Polar residues predominate over residues 839–848; that stretch reads ETQSTDQIGQ. 2 disordered regions span residues 839–861 and 880–971; these read ETQS…LASD and ALRS…TNKR. A compositionally biased stretch (basic and acidic residues) spans 880-890; it reads ALRSDSDEPKD. Polar residues predominate over residues 898–909; the sequence is LKSQLTKIQETE. Residues 941 to 954 show a composition bias toward acidic residues; the sequence is DSDSAVLEDDDNEE. The stretch at 1058 to 1101 is one WD 8 repeat; the sequence is STAEFFNKSPMRPLSPVAPVSSFKSNPTEFLPPWNTRRLLKQIF. The segment at 1225–1267 adopts an RING-type; degenerate zinc-finger fold; it reads CVFCERPIKTLAIGLLECGHEGHFQCLQSWFLDEGMAECPGGC.

The protein belongs to the WD repeat RTC1 family.

It localises to the vacuole. Its function is as follows. May be involved in a process influencing telomere capping. The polypeptide is Restriction of telomere capping protein 1 (RTC1) (Zygosaccharomyces rouxii (strain ATCC 2623 / CBS 732 / NBRC 1130 / NCYC 568 / NRRL Y-229)).